The sequence spans 337 residues: Adenylosuccinate synthetase (337 aa).

GTP contacts are provided by residues 12–18 and 42–44; these read GDEGKGK and GHT. Residue Asp-13 is the Proton acceptor of the active site. Residues Asp-13 and Gly-42 each coordinate Mg(2+). Residues 13–16, 40–43, Thr-127, Arg-141, Gln-179, Thr-194, and Arg-256 contribute to the IMP site; these read DEGK and NAGH. His-43 functions as the Proton donor in the catalytic mechanism. Position 252-258 (252-258) interacts with substrate; sequence TVTGRRR. GTP is bound by residues Arg-258, 284-286, and 324-326; these read CLD and STG.

Belongs to the adenylosuccinate synthetase family. In terms of assembly, homodimer. Mg(2+) serves as cofactor.

It is found in the cytoplasm. It catalyses the reaction IMP + L-aspartate + GTP = N(6)-(1,2-dicarboxyethyl)-AMP + GDP + phosphate + 2 H(+). It participates in purine metabolism; AMP biosynthesis via de novo pathway; AMP from IMP: step 1/2. In terms of biological role, plays an important role in the de novo pathway of purine nucleotide biosynthesis. Catalyzes the first committed step in the biosynthesis of AMP from IMP. This chain is Adenylosuccinate synthetase, found in Methanococcus maripaludis (strain C6 / ATCC BAA-1332).